The sequence spans 274 residues: Ribosomal RNA small subunit methyltransferase A (274 aa).

N17, L19, G44, E65, D89, and N111 together coordinate S-adenosyl-L-methionine.

The protein belongs to the class I-like SAM-binding methyltransferase superfamily. rRNA adenine N(6)-methyltransferase family. RsmA subfamily.

The protein resides in the cytoplasm. The catalysed reaction is adenosine(1518)/adenosine(1519) in 16S rRNA + 4 S-adenosyl-L-methionine = N(6)-dimethyladenosine(1518)/N(6)-dimethyladenosine(1519) in 16S rRNA + 4 S-adenosyl-L-homocysteine + 4 H(+). In terms of biological role, specifically dimethylates two adjacent adenosines (A1518 and A1519) in the loop of a conserved hairpin near the 3'-end of 16S rRNA in the 30S particle. May play a critical role in biogenesis of 30S subunits. This Buchnera aphidicola subsp. Schizaphis graminum (strain Sg) protein is Ribosomal RNA small subunit methyltransferase A.